Consider the following 89-residue polypeptide: Putative protein p54 (89 aa).

The polypeptide is Putative protein p54 (54) (Acyrthosiphon pisum secondary endosymbiont phage 1 (Bacteriophage APSE-1)).